The chain runs to 57 residues: uncharacterized protein (57 aa).

This is an uncharacterized protein from Halorubrum sp. PV6 (HRPV-1).